Here is a 601-residue protein sequence, read N- to C-terminus: Alpha-terpineol synthase, chloroplastic (601 aa).

A chloroplast-targeting transit peptide spans 1 to 47 (MSTISIHHVGILRNPLHSKSKRASINKPWSLSLPRSSSASRLVEPCR). Residues aspartate 357 and aspartate 361 each contribute to the Mn(2+) site. Positions 357–361 (DDVYD) match the DDXXD motif motif. 2 homodimerization regions span residues 363-369 (YGTLDEL) and 435-471 (EAEW…ELSL). Residues aspartate 499 and glutamate 507 each contribute to the Mn(2+) site.

This sequence belongs to the terpene synthase family. Homodimer. It depends on Mn(2+) as a cofactor. Requires Mg(2+) as cofactor.

The protein localises to the plastid. Its subcellular location is the chloroplast. The enzyme catalyses (2E)-geranyl diphosphate + H2O = (S)-alpha-terpineol + diphosphate. It carries out the reaction (2E)-geranyl diphosphate + H2O = (R)-alpha-terpineol + diphosphate. The protein operates within secondary metabolite biosynthesis; terpenoid biosynthesis. Its function is as follows. Involved in the biosynthesis of phenolic monoterpenes natural products. Monoterpene synthase which catalyzes the conversion of geranyl diphosphate (GPP) to alpha-terpineol (isomer is not determined). This Thymus caespititius (Cretan thyme) protein is Alpha-terpineol synthase, chloroplastic.